The sequence spans 582 residues: Aspartate--tRNA ligase (582 aa).

Residues 198-201 form an aspartate region; that stretch reads QIFK. Arginine 220 lines the L-aspartate pocket. ATP contacts are provided by residues 220–222 and glutamine 229; that span reads RDE. Position 445 (histidine 445) interacts with L-aspartate. Residue glutamate 479 participates in ATP binding. Arginine 486 provides a ligand contact to L-aspartate. Residue 531-534 coordinates ATP; sequence GFDR.

The protein belongs to the class-II aminoacyl-tRNA synthetase family. Type 1 subfamily. Homodimer.

The protein localises to the cytoplasm. The catalysed reaction is tRNA(Asp) + L-aspartate + ATP = L-aspartyl-tRNA(Asp) + AMP + diphosphate. In terms of biological role, catalyzes the attachment of L-aspartate to tRNA(Asp) in a two-step reaction: L-aspartate is first activated by ATP to form Asp-AMP and then transferred to the acceptor end of tRNA(Asp). The chain is Aspartate--tRNA ligase from Amoebophilus asiaticus (strain 5a2).